Consider the following 1000-residue polypeptide: Kinesin-like protein CIN8 (1000 aa).

Residues 1–26 (MPAENQNTGQDRSSNSISKNGNSQVG) show a composition bias toward polar residues. A disordered region spans residues 1-28 (MPAENQNTGQDRSSNSISKNGNSQVGCH). Residues 36–477 (NITVAVRCRG…LEYASKAKNI (442 aa)) enclose the Kinesin motor domain. 128–135 (GMTSTGKT) lines the ATP pocket. The segment covering 220-242 (ANNTTSNSASSSRSNSRNSSPRS) has biased composition (low complexity). 2 disordered regions span residues 220 to 248 (ANNT…DLTP) and 260 to 312 (KSLP…PNDQ). Polar residues predominate over residues 261–276 (SLPNTIKQQYQQQQAV). The segment covering 277–301 (NSRNNSSSNSGSTTNNASSNTNTNN) has biased composition (low complexity). Residues 302–312 (GQRSSMAPNDQ) are compositionally biased toward polar residues. Coiled coils occupy residues 518–615 (MSQD…MALH) and 860–904 (ISVM…IKNS). The tract at residues 970–1000 (VISPKKHAIEDENKSSENVDNEGSRKMLKIE) is disordered. Residue Ser-972 is modified to Phosphoserine. Over residues 976 to 1000 (HAIEDENKSSENVDNEGSRKMLKIE) the composition is skewed to basic and acidic residues.

This sequence belongs to the TRAFAC class myosin-kinesin ATPase superfamily. Kinesin family. BimC subfamily.

It is found in the cytoplasm. It localises to the cytoskeleton. The protein resides in the spindle. The protein localises to the mitochondrion. Elongates the mitotic spindle by interacting with spindle microtubules to generate an outward force pushing spindle poles apart. Following spindle assembly, CIN8 and KIP1 apparently act to oppose a force, possibly generated by KAR3, that draws separated poles back together. The chain is Kinesin-like protein CIN8 (CIN8) from Saccharomyces cerevisiae (strain ATCC 204508 / S288c) (Baker's yeast).